A 445-amino-acid chain; its full sequence is Glutamate-1-semialdehyde 2,1-aminomutase (445 aa).

Position 263 is an N6-(pyridoxal phosphate)lysine (K263).

This sequence belongs to the class-III pyridoxal-phosphate-dependent aminotransferase family. HemL subfamily. Pyridoxal 5'-phosphate is required as a cofactor.

It localises to the cytoplasm. It carries out the reaction (S)-4-amino-5-oxopentanoate = 5-aminolevulinate. It functions in the pathway porphyrin-containing compound metabolism; protoporphyrin-IX biosynthesis; 5-aminolevulinate from L-glutamyl-tRNA(Glu): step 2/2. The sequence is that of Glutamate-1-semialdehyde 2,1-aminomutase from Haloarcula marismortui (strain ATCC 43049 / DSM 3752 / JCM 8966 / VKM B-1809) (Halobacterium marismortui).